A 189-amino-acid polypeptide reads, in one-letter code: Early E3 20.5 kDa glycoprotein (189 aa).

N-linked (GlcNAc...) asparagine; by host glycans are attached at residues Asn-73 and Asn-137.

It belongs to the adenoviridae E3_20 family.

Functionally, E3 proteins seem to be dispensable for virus growth in tissue culture cells. They are potentially important for virus growth under special conditions; E3 region may help adenoviruses to evade the immune surveillance of the host. In Human adenovirus B serotype 3 (HAdV-3), this protein is Early E3 20.5 kDa glycoprotein.